We begin with the raw amino-acid sequence, 688 residues long: Polyphosphate kinase (688 aa).

Asparagine 45 serves as a coordination point for ATP. Residues arginine 375 and arginine 405 each contribute to the Mg(2+) site. A PLD phosphodiesterase domain is found at 430–464 (PGLKIHAKLFLISRKENGEVVRYAHIGTGNFNEKT). Histidine 435 acts as the Phosphohistidine intermediate in catalysis. Positions 468, 564, and 592 each coordinate ATP.

Belongs to the polyphosphate kinase 1 (PPK1) family. The cofactor is Mg(2+). An intermediate of this reaction is the autophosphorylated ppk in which a phosphate is covalently linked to a histidine residue through a N-P bond.

It carries out the reaction [phosphate](n) + ATP = [phosphate](n+1) + ADP. In terms of biological role, catalyzes the reversible transfer of the terminal phosphate of ATP to form a long-chain polyphosphate (polyP). The chain is Polyphosphate kinase from Escherichia coli O157:H7.